The primary structure comprises 832 residues: Prickle-like protein 1-B (832 aa).

Positions 14-122 (FGCQRSSTSD…NIKMLSRAVM (109 aa)) constitute a PET domain. LIM zinc-binding domains follow at residues 124–188 (AMCE…ELLK), 189–249 (PRCS…HYAE), and 250–313 (YCES…EDVH). 4 disordered regions span residues 312-346 (VHAS…ADQC), 428-455 (QQPS…QRNN), 602-701 (ICQE…KERN), and 766-832 (CSSS…CIIS). Basic and acidic residues-rich tracts occupy residues 432 to 453 (EDNR…DLQR) and 603 to 614 (CQEKPPPEEKPM). Composition is skewed to basic residues over residues 669-680 (RPHHHRRRKSRK) and 816-832 (TKSK…CIIS). The residue at position 829 (cysteine 829) is a Cysteine methyl ester. Cysteine 829 carries S-farnesyl cysteine lipidation. Residues 830-832 (IIS) constitute a propeptide, removed in mature form.

The protein belongs to the prickle / espinas / testin family. As to quaternary structure, interacts with dvl2/dsh and mapk8/jnk1. In terms of tissue distribution, expressed in the dorsal marginal zone of early gastrulae (stage 10). As gastrulation proceeds, expression expands to include the lateral and ventral marginal zones, excluding the few rows of cells above the blastopore lip. Expression moves dorsally with gastrulation cell movements, and by the end of gastrulation expression is seen in dorsal mesoderm and posterior but not anterior neural ectoderm. Expression becomes down-regulated in mesoderm but remains strong in posterior ectoderm through the neurula stages. During tailbud stages, expressed in the pronephric duct, tailbud, tailtip and forming somites. In the most posterior regions, expressed in notochord and in the floorplate of the neural tube with weak expression in the roofplate. At stage 30, expressed in a complex pattern in the head including strong expression in the lens and otic vesicle.

Its subcellular location is the cell membrane. In terms of biological role, acts in a planar cell polarity (PCP) complex; polarization along the apical/basal axis of epithelial cells. Regulates the polarized assembly of fibronectrin on the surface of the mesoderm during gastrulation. Essential for gastrulation cell movements, cooperating with dvl2/dsh to activate jnk. Acts together with tes to control axial elongation. This chain is Prickle-like protein 1-B (prickle1-b), found in Xenopus laevis (African clawed frog).